Reading from the N-terminus, the 92-residue chain is Large ribosomal subunit protein eL43 (92 aa).

4 residues coordinate Zn(2+): Cys39, Cys42, Cys57, and Cys60. A C4-type zinc finger spans residues 39–60 (CPVCGFPKLKRASTSIWVCGKC).

Belongs to the eukaryotic ribosomal protein eL43 family. Putative zinc-binding subfamily. In terms of assembly, part of the 50S ribosomal subunit. Zn(2+) is required as a cofactor.

In terms of biological role, binds to the 23S rRNA. The chain is Large ribosomal subunit protein eL43 from Methanocaldococcus jannaschii (strain ATCC 43067 / DSM 2661 / JAL-1 / JCM 10045 / NBRC 100440) (Methanococcus jannaschii).